The chain runs to 310 residues: Protein translocase subunit SecF (310 aa).

6 helical membrane-spanning segments follow: residues 20–42 (FKKVSYTFSIILSLISVISIGIY), 140–160 (IEAGTMAMLFSFLAIMVYIWV), 164–184 (WYFGLGILIALMHDLILALGF), 194–214 (LSTIAAVLTIIGYSVNDSVVI), 246–266 (ILTVITTLLANLALILFGGEA), and 272–292 (VLVFFGIIAGTYSSIFISAPI).

The protein belongs to the SecD/SecF family. SecF subfamily. As to quaternary structure, forms a complex with SecD. Part of the essential Sec protein translocation apparatus which comprises SecA, SecYEG and auxiliary proteins SecDF-YajC and YidC.

Its subcellular location is the cell inner membrane. Functionally, part of the Sec protein translocase complex. Interacts with the SecYEG preprotein conducting channel. SecDF uses the proton motive force (PMF) to complete protein translocation after the ATP-dependent function of SecA. In Rickettsia canadensis (strain McKiel), this protein is Protein translocase subunit SecF.